We begin with the raw amino-acid sequence, 339 residues long: MSDEITILPTTVIGSYPRPKWLRETIRLHRAGKVNQEDLEEAFNDAVVTVVRDHQEAGIDVPTDGEMRRDEMVEFFAERLSGFKFYGHVRVWGDHYYRKPSVTGKIKYNNPMLLDEVNFAKSVSYTQNLKVTITGPYTISEWSYNEYYKTQRDMAFDLAKVINQEIKNLVDIGIKVIQVDEPAIHTRKEDVEWAIDSINESIKGVNVKVVLHVCYGEYSYLEPHLDKLKVDQINLALKNYNYTPVKLFKKWDREIGVGVIDVHNRKIESVEEVAEDLRKLLEYFKPEMVWVNPDCGLKLLPRKIALQKLINMVKGTLIVREELKKKGYTNTTLKPLINR.

Zn(2+) is bound by residues H212, C214, and C295.

It belongs to the archaeal MetE family. It depends on Zn(2+) as a cofactor.

Its pathway is amino-acid biosynthesis; L-methionine biosynthesis via de novo pathway. In terms of biological role, catalyzes the transfer of a methyl group to L-homocysteine resulting in methionine formation. The physiological methyl donor is unknown. The sequence is that of Methionine synthase from Sulfolobus acidocaldarius (strain ATCC 33909 / DSM 639 / JCM 8929 / NBRC 15157 / NCIMB 11770).